The chain runs to 153 residues: T cell receptor delta constant (153 aa).

N-linked (GlcNAc...) asparagine glycosylation occurs at N14. An intrachain disulfide couples C20 to C71. An N-linked (GlcNAc...) asparagine glycan is attached at N77. Over residues 85–102 the composition is skewed to basic and acidic residues; sequence FEVKTDSTDHVKPKETEN. Positions 85–112 are disordered; that stretch reads FEVKTDSTDHVKPKETENTKQPSKSCHK. The chain crosses the membrane as a helical span at residues 130–152; it reads LGLRMLFAKTVAVNFLLTAKLFF.

Gamma-delta TR is a heterodimer composed of a gamma and delta chain; disulfide-linked. The gamma-delta TR is associated with the transmembrane signaling CD3 coreceptor proteins following the stoichiometry: a single gamma-delta TR heterodimer associates with one CD3D-CD3E heterodimer, one CD3G-CD3E heterodimer and one CD247 homodimer forming a stable octameric structure. Upon activation, gamma-delta TR complex associates with FCER1G to initiate intracellular signaling.

It localises to the cell membrane. In terms of biological role, constant region of T cell receptor (TR) delta chain that participates in the antigen recognition. Gamma-delta TRs recognize a variety of self and foreign non-peptide antigens frequently expressed at the epithelial boundaries between the host and external environment, including endogenous lipids presented by MH-like protein CD1D and phosphoantigens presented by butyrophilin-like molecule BTN3A1. Upon antigen recognition induces rapid, innate-like immune responses involved in pathogen clearance and tissue repair. Binding of gamma-delta TR complex to antigen triggers phosphorylation of immunoreceptor tyrosine-based activation motifs (ITAMs) in the CD3 chains by the LCK and FYN kinases, allowing the recruitment, phosphorylation, and activation of ZAP70 that facilitates phosphorylation of the scaffolding proteins LCP2 and LAT. This lead to the formation of a supramolecular signalosome that recruits the phospholipase PLCG1, resulting in calcium mobilization and ERK activation, ultimately leading to T cell expansion and differentiation into effector cells. Gamma-delta TRs are produced through somatic rearrangement of a limited repertoire of variable (V), diversity (D), and joining (J) genes. The potential diversity of gamma-delta TRs is conferred by the unique ability to rearrange (D) genes in tandem and to utilize all three reading frames. The combinatorial diversity is considerably increased by the sequence exonuclease trimming and random nucleotide (N) region additions which occur during the V-(D)-J rearrangements. The sequence is that of T cell receptor delta constant from Homo sapiens (Human).